A 74-amino-acid polypeptide reads, in one-letter code: Guanine nucleotide-binding protein G(T) subunit gamma-T1 (74 aa).

Residue Cys-71 is modified to Cysteine methyl ester. Residue Cys-71 is the site of S-farnesyl cysteine attachment. A propeptide spans 72–74 (removed in mature form); the sequence is VIS.

The protein belongs to the G protein gamma family. G proteins are composed of 3 units, alpha, beta and gamma. In terms of tissue distribution, retinal rod outer segment.

Its subcellular location is the cell membrane. Guanine nucleotide-binding proteins (G proteins) are involved as a modulator or transducer in various transmembrane signaling systems. The beta and gamma chains are required for the GTPase activity, for replacement of GDP by GTP, and for G protein-effector interaction. The chain is Guanine nucleotide-binding protein G(T) subunit gamma-T1 (GNGT1) from Canis lupus familiaris (Dog).